The primary structure comprises 371 residues: Nicotinate-nucleotide pyrophosphorylase [carboxylating], chloroplastic (371 aa).

The N-terminal 48 residues, 1–48 (MPAAAAAAAPPNPNVLQLAPRLRGLVSFPSSYSSSSPFSNRLRLRLPR), are a transit peptide targeting the chloroplast. Substrate-binding positions include Arg162, 193–195 (TRK), Arg217, Lys227, Glu260, Asp287, 319–321 (SGN), and 340–342 (SGA).

It belongs to the NadC/ModD family.

The protein resides in the plastid. It localises to the chloroplast. The enzyme catalyses nicotinate beta-D-ribonucleotide + CO2 + diphosphate = quinolinate + 5-phospho-alpha-D-ribose 1-diphosphate + 2 H(+). It functions in the pathway cofactor biosynthesis; NAD(+) biosynthesis; nicotinate D-ribonucleotide from quinolinate: step 1/1. In terms of biological role, involved in the catabolism of quinolinic acid (QA). The polypeptide is Nicotinate-nucleotide pyrophosphorylase [carboxylating], chloroplastic (Oryza sativa subsp. japonica (Rice)).